Consider the following 459-residue polypeptide: Protein YTP1 (459 aa).

The Extracellular segment spans residues 1–6; sequence MTAANK. A helical membrane pass occupies residues 7 to 27; that stretch reads NIVFGFSRSISAILLICFFFE. The Cytoplasmic portion of the chain corresponds to 28 to 59; that stretch reads KVCGDMEHDMGMDDTSGYTRPEIVQAGSKSFH. A helical transmembrane segment spans residues 60 to 80; sequence WLCTLGFLLLLPSVVTCLSFA. Topologically, residues 81–82 are extracellular; it reads GR. The chain crosses the membrane as a helical span at residues 83–103; that stretch reads IYSATLLQCTCAVYAFLEAAV. Over 104–122 the chain is Cytoplasmic; sequence LRFQDNDGVENRTSRGTAW. A helical membrane pass occupies residues 123 to 143; sequence FLVGLTWITLFFGGLAGGTGF. The Extracellular portion of the chain corresponds to 144–170; the sequence is LVKSKRLQTFISNAGEKRLSYIHRGLS. A helical transmembrane segment spans residues 171–191; the sequence is FLTVLTGWVKVCLAPVALFGF. Residues 192 to 205 are Cytoplasmic-facing; the sequence is CREAHTGQCIAHGI. A helical membrane pass occupies residues 206-226; that stretch reads MGSAFVLYGFIYVLVLVIPWI. Residues 227 to 266 lie on the Extracellular side of the membrane; sequence RSAQTSYSQDYVDSWVMCIWGVVNTFTEHRWGREGWSVHD. Residues 267 to 287 traverse the membrane as a helical segment; sequence YQHTFMGIIWWTGGILGIFLS. At 288-295 the chain is on the cytoplasmic side; the sequence is RNGRRTFV. Residues 296-316 form a helical membrane-spanning segment; sequence PSLIIIFTGWAMSEHAQHLII. The Extracellular portion of the chain corresponds to 317–322; it reads STKVHN. Residues 323–343 traverse the membrane as a helical segment; the sequence is MFGLVLMCGGALRIIEISFLL. The Cytoplasmic segment spans residues 344–351; that stretch reads RDKRTLDK. A helical membrane pass occupies residues 352 to 372; the sequence is IHSFQYLAPFCLVCSGLLFMG. Residues 373–389 are Extracellular-facing; sequence ANEEQLILVLRLGGDHS. Residues 390-410 form a helical membrane-spanning segment; the sequence is AYVLIIVSGAFLVYFWMIACL. Residues 411-459 are Cytoplasmic-facing; sequence EFYLYLLEKGKQGFLPKSYELEEENNNVSFELDNISNEDVDEDTTPFNV.

The protein localises to the membrane. The polypeptide is Protein YTP1 (YTP1) (Saccharomyces cerevisiae (strain ATCC 204508 / S288c) (Baker's yeast)).